We begin with the raw amino-acid sequence, 411 residues long: MIQVLLVTICLAAFPYQGSSIILESGNVNDYEIVYPRKVTPVPRGAVQPKYEDAMQYELKVNGEPVVLHLEKNKGLFSEDYSETHYSPDGREITTYPLVEDHCYYHGRIENDADSTASISTCNGLKGHFKLQGEMYLIEPLELSDSEAHAVYKYENVEKEDEAPKMCGVTQNWESYEPTKKAFQLNLTPEQQGFPQRYVELVIIADHRMYMKYKRDSNKITQWVHQMVNTINEIYRPLNIQFALVGLEIWSNQDLITVTSVSDDTLISFANWRETVLLRRKSHDNAQLLTAIVFDEGIIGRAPLAGMCDPNRSVGTVQDHSKINFRVAIIMAHEIGHNLGMGHDDNSCTCGGYSCIMLPRLSKQPSKLFSDCSKKDYLTFLKVKNPQCILNKPLRTDTVSTPVSGNELLEA.

The N-terminal stretch at 1–20 (MIQVLLVTICLAAFPYQGSS) is a signal peptide. A propeptide spanning residues 21–189 (IILESGNVND…KKAFQLNLTP (169 aa)) is cleaved from the precursor. Positions 197-393 (RYVELVIIAD…KNPQCILNKP (197 aa)) constitute a Peptidase M12B domain. Residues Glu200 and Asp284 each contribute to the Ca(2+) site. 3 cysteine pairs are disulfide-bonded: Cys308/Cys388, Cys348/Cys372, and Cys350/Cys355. Asn311 carries an N-linked (GlcNAc...) asparagine glycan. His333 serves as a coordination point for Zn(2+). Glu334 is a catalytic residue. The Zn(2+) site is built by His337 and His343. Ca(2+) is bound by residues Cys388, Asn391, Val403, Asn406, Leu408, and Glu410.

Belongs to the venom metalloproteinase (M12B) family. P-I subfamily. As to quaternary structure, monomer. Requires Zn(2+) as cofactor. Expressed by the venom gland.

Its subcellular location is the secreted. Inhibited by EDTA and 1,10-phenanthroline, but not by PMSF. In terms of biological role, this venom zinc protease has fibrinolytic activity. The recombinant enzyme cleaves both alpha- (FGA) and beta-chains (FGB) of fibrinogen, but not the gamma-chain. The recombinant protein does not produce hemorrhage in mice and does not have effect on ADP- or collagen-stimulated platelet aggregation. This Agkistrodon piscivorus leucostoma (Western cottonmouth) protein is Snake venom metalloproteinase VMP1.